A 287-amino-acid polypeptide reads, in one-letter code: ATP synthase gamma chain (287 aa).

Belongs to the ATPase gamma chain family. In terms of assembly, F-type ATPases have 2 components, CF(1) - the catalytic core - and CF(0) - the membrane proton channel. CF(1) has five subunits: alpha(3), beta(3), gamma(1), delta(1), epsilon(1). CF(0) has three main subunits: a, b and c.

The protein localises to the cell membrane. In terms of biological role, produces ATP from ADP in the presence of a proton gradient across the membrane. The gamma chain is believed to be important in regulating ATPase activity and the flow of protons through the CF(0) complex. The polypeptide is ATP synthase gamma chain (Bacillus velezensis (strain DSM 23117 / BGSC 10A6 / LMG 26770 / FZB42) (Bacillus amyloliquefaciens subsp. plantarum)).